The following is a 262-amino-acid chain: LOB domain-containing protein 18 (262 aa).

In terms of domain architecture, LOB spans 36–138 (GPCGACKFLR…AEVSYLQAHL (103 aa)). Positions 223–262 (VGLGGENSHDLQALAHELLHRQGSPPPAATDHSPSRTMSR) are disordered.

It belongs to the LOB domain-containing protein family. In terms of assembly, homodimer and heterodimer with LBD16. Interacts with GIP1. As to expression, expressed in roots, stems, leaves and flowers. Expressed in vascular tissues of hypocotyls, leaves, roots, developing floral organs and siliques.

It is found in the nucleus. Involved in the positive regulation of tracheary element (TE) differentiation. Involved in a positive feedback loop that maintains or promotes NAC030/VND7 expression that regulates TE differentiation-related genes. Functions in the initiation and emergence of lateral roots, in conjunction with LBD16, downstream of ARF7 and ARF19. Transcriptional activator that directly regulates EXPA14, a gene encoding a cell wall-loosening factor that promotes lateral root emergence. Activates EXPA14 by directly binding to a specific region of its promoter. Transcriptional activator that directly regulates EXPA17, a gene encoding a cell wall-loosening factor that promotes lateral root emergence. Acts downstream of the auxin influx carriers AUX1 and LAX1 in the regulation of lateral root initiation and development. This Arabidopsis thaliana (Mouse-ear cress) protein is LOB domain-containing protein 18 (LBD18).